A 138-amino-acid polypeptide reads, in one-letter code: Protein X (138 aa).

Positions 20-43 (PLRGQPSGPSVSGTSAGSPSSAAS) are disordered. A compositionally biased stretch (low complexity) spans 25 to 43 (PSGPSVSGTSAGSPSSAAS). A mitochondrial targeting sequence region spans residues 68–113 (PCCLGFTCADLRTMDSTVNFVPWHAKRQLGMMQKDFWTAYIRDQLL).

The protein belongs to the orthohepadnavirus protein X family. As to quaternary structure, may form homodimer. May interact with host CEBPA, CFLAR, CREB1, DDB1, E4F1, HBXIP, HSPD1/HSP60, NFKBIA, POLR2E and SMAD4. Interacts with host SMC5-SMC6 complex and induces its degradation. Interacts with host TRPC4AP; leading to prevent ubiquitination of TRPC4AP. Interacts with host PLSCR1; this interaction promotes ubiquitination and degradation of HBx and impairs HBx-mediated cell proliferation. A fraction may be phosphorylated in insect cells and HepG2 cells, a human hepatoblastoma cell line. Phosphorylated in vitro by host protein kinase C or mitogen-activated protein kinase. N-acetylated in insect cells.

It is found in the host cytoplasm. It localises to the host nucleus. Its subcellular location is the host mitochondrion. Functionally, multifunctional protein that plays a role in silencing host antiviral defenses and promoting viral transcription. Does not seem to be essential for HBV infection. May be directly involved in development of cirrhosis and liver cancer (hepatocellular carcinoma). Most of cytosolic activities involve modulation of cytosolic calcium. The effect on apoptosis is controversial depending on the cell types in which the studies have been conducted. May induce apoptosis by localizing in mitochondria and causing loss of mitochondrial membrane potential. May also modulate apoptosis by binding host CFLAR, a key regulator of the death-inducing signaling complex (DISC). Promotes viral transcription by using the host E3 ubiquitin ligase DDB1 to target the SMC5-SMC6 complex to proteasomal degradation. This host complex would otherwise bind to viral episomal DNA, and prevents its transcription. Moderately stimulates transcription of many different viral and cellular transcription elements. Promoters and enhancers stimulated by HBx contain DNA binding sites for NF-kappa-B, AP-1, AP-2, c-EBP, ATF/CREB, or the calcium-activated factor NF-AT. This Ground squirrel hepatitis virus (strain 27) (GSHV) protein is Protein X.